We begin with the raw amino-acid sequence, 161 residues long: Putative 4-hydroxy-4-methyl-2-oxoglutarate aldolase (161 aa).

Substrate contacts are provided by residues 75–78 and Arg97; that span reads GDQL. Asp98 contributes to the a divalent metal cation binding site.

This sequence belongs to the class II aldolase/RraA-like family. As to quaternary structure, homotrimer. It depends on a divalent metal cation as a cofactor.

The catalysed reaction is 4-hydroxy-4-methyl-2-oxoglutarate = 2 pyruvate. It carries out the reaction oxaloacetate + H(+) = pyruvate + CO2. Catalyzes the aldol cleavage of 4-hydroxy-4-methyl-2-oxoglutarate (HMG) into 2 molecules of pyruvate. Also contains a secondary oxaloacetate (OAA) decarboxylase activity due to the common pyruvate enolate transition state formed following C-C bond cleavage in the retro-aldol and decarboxylation reactions. This chain is Putative 4-hydroxy-4-methyl-2-oxoglutarate aldolase, found in Vibrio cholerae serotype O1 (strain ATCC 39315 / El Tor Inaba N16961).